We begin with the raw amino-acid sequence, 200 residues long: Peroxiredoxin (200 aa).

The 160-residue stretch at Ala6–His165 folds into the Thioredoxin domain. Cys52 acts as the Cysteine sulfenic acid (-SOH) intermediate in catalysis.

Belongs to the peroxiredoxin family. AhpC/Prx1 subfamily. Homodimer; disulfide-linked, upon oxidation.

It catalyses the reaction a hydroperoxide + [thioredoxin]-dithiol = an alcohol + [thioredoxin]-disulfide + H2O. Functionally, thiol-specific peroxidase that catalyzes the reduction of hydrogen peroxide and organic hydroperoxides to water and alcohols, respectively. Plays a role in cell protection against oxidative stress by detoxifying peroxides and as sensor of hydrogen peroxide-mediated signaling events. The chain is Peroxiredoxin from Cynops pyrrhogaster (Japanese fire-bellied newt).